The following is a 741-amino-acid chain: Moderate conductance mechanosensitive channel YbiO (741 aa).

The signal sequence occupies residues 1 to 18 (MRWILFILFCLLGAPAHA). Residues 22-42 (PGVTTTTTTDSTTEPAPEPDI) form a disordered region. Low complexity predominate over residues 25–34 (TTTTTTDSTT). Transmembrane regions (helical) follow at residues 143-163 (MLAV…LPLY), 185-205 (AMII…LFVG), 225-245 (LFLN…LIFC), 268-288 (LSWL…IISN), 294-314 (IGAL…LYLI), 343-363 (FALV…FFSL), 372-392 (FMMG…FVSG), 432-452 (ILTV…FDFW), 466-486 (ILIR…VLAS), 509-529 (LLTL…IMIV), and 533-553 (IGVN…AISF).

This sequence belongs to the MscS (TC 1.A.23) family. In terms of assembly, homoheptamer.

Its subcellular location is the cell inner membrane. Its function is as follows. Mechanosensitive channel that protects cells against hypoosmotic stress when highly overexpressed. This Escherichia coli (strain K12) protein is Moderate conductance mechanosensitive channel YbiO (ybiO).